A 623-amino-acid polypeptide reads, in one-letter code: MPAREVYLKRPATRRQLEGICTRYDGQQRITQLDCEEGCSKRTQPPQRLNPRYKSPDLIHISFIIVLLCILSMTSSVVAQTTTGSSSSKAAATPILPRQTLPTTISLPPLNISHPVLQLALPPTSSLYLTFSICSLTSNATILPTVLISTSSPASFNLGSKPIRDASTGGIPTSSGGKGYNYKSGRNGATWGLKWSSGFGNWTLNGTSETQVHLLLGLGLGNDGSTLNTTGVGNGNVVVQMGASTSGPLHALSAVYPLLGDTTSTSALIFSPLLYSSPQPEPSYPNYTLPGAQLAFPDFSYSEPLNSSLSSNLTLIVVPTNASPTSTDLGNSICAINAASANSSVSGANNTILKSFQPEWMTVGDEQGFRSYWVLGDLAEQGNYTAWVSDDKGVLSQPAWFATKPAGFPCQLVMPNDVCPNLGYSAPLDANSTAVTSPSGATISPTSPIQTLPDDLLELIVQNLEAFSTSLLSHACGRDLFSHVSSCLDCYSAYRDWLCRIVVPQCGAANSTSGATVIETATSTSTSSGTFPTPSTVLRTPSSPRNPSLPIPAYSYYELLPCMSTCNRADRSCPVSMGIRCPKRKVNAAKSYAFVGDDHSYGDGSAAQGVAAQDRWGNRWCNG.

Topologically, residues 1-57 (MPAREVYLKRPATRRQLEGICTRYDGQQRITQLDCEEGCSKRTQPPQRLNPRYKSPD) are extracellular. A helical membrane pass occupies residues 58–78 (LIHISFIIVLLCILSMTSSVV). Residues 79–623 (AQTTTGSSSS…DRWGNRWCNG (545 aa)) lie on the Cytoplasmic side of the membrane. The segment covering 524-536 (TSTSSGTFPTPST) has biased composition (low complexity). The disordered stretch occupies residues 524–544 (TSTSSGTFPTPSTVLRTPSSP). A required for targeting to the cell membrane region spans residues 600–623 (SYGDGSAAQGVAAQDRWGNRWCNG).

As to quaternary structure, forms an oligomer by disulfide bonds. Interacts with CCH1 to form a Ca(2+) influx channel. Interacts (via C-terminus) with CCP1/cytochrome c peroxidase; the interaction may contribute to cellular detoxification of radicals.

It localises to the cell membrane. Calcium-permeable, cation-selective stretch-activated channel (SAC) that functions together with CCH1 to mediate calcium entry into cells. May additionally play a role in cellular detoxification of radicals. In Cryptococcus neoformans var. grubii serotype A (strain H99 / ATCC 208821 / CBS 10515 / FGSC 9487) (Filobasidiella neoformans var. grubii), this protein is Stretch-activated cation channel MID1.